We begin with the raw amino-acid sequence, 583 residues long: MMLSLPKLSAGGVVVLLATLLHTLTVQGASVRHHRLRGGDQGGFLAPSSDMIKALEYIESLKQRADGPESPTGDYDEVDKFRFLVQLASLQDENTPTHEDATRWPDNKVPQWVRSLLRVLDQAGESPESQAAGNERRLHKTRRPVADGESPAGDYAGFVKPHKKYPLMFEDEENGRDNKRATEDLDEQYTPQSLANMRSIFEELGKLSAAQKRDDEEDGEDDDDLYRVRNAAYEDVTGGEEWVPLEEQLETEELVKGSHEEYKRALGDISEQGMENMERRGEEEDENPDDDTKLVDYYLLKVLEMTDQAQKRDLMEGRRRLLSRPSLIDPRAIKQLLSAISMKLQVPPEDLVGMLFMEETRKQQQRLPEPQLARNPSQPRYKSRVIKYYNGRQPEVTVSDIPHDVKTEDILKVLGLGNLANKNAKFSLLKQRPYKTAMTNYFNPNGRRGSLFLSELNKAPSKRKDDYDDDDAVDEDEESTFLAAKLLTEYPDTSSSNRKRAIDSAANGQLPYELYEEAMKDFFDQVDNGKSALAKRDTQGKEEPEGPQKPPAQDPAQETVDQTPPESGTEDGKEYHGKIVAGM.

A signal peptide spans 1-28; it reads MMLSLPKLSAGGVVVLLATLLHTLTVQG. Disordered stretches follow at residues 123–159 and 526–583; these read AGES…AGFV and VDNG…VAGM. Over residues 534-546 the composition is skewed to basic and acidic residues; that stretch reads AKRDTQGKEEPEG.

It belongs to the chromogranin/secretogranin protein family.

Its subcellular location is the secreted. In terms of biological role, neuroendocrine protein of the granin family that regulates the biogenesis of secretory granules. Required for neurovascular modeling of the hindbrain. Acts in a non-cell autonomous manner and is required for migration and proliferation of central artery endothelial cells. Required for normal courting behavior and spawning. The polypeptide is Secretogranin-2b (Danio rerio (Zebrafish)).